The primary structure comprises 150 residues: Lipoprotein signal peptidase (150 aa).

A run of 3 helical transmembrane segments spans residues 5–25, 59–79, and 82–102; these read LSLVIIVVGIIADQVFKNWVV, QQWFFLVLTPIVLIVALWFLW, and MGQNWYFAGLTLIIAGALGNF. Residues aspartate 113 and aspartate 129 contribute to the active site. A helical membrane pass occupies residues 124-144; it reads IFNIADILLSVGFVVLFIAIL.

This sequence belongs to the peptidase A8 family.

The protein localises to the cell membrane. The catalysed reaction is Release of signal peptides from bacterial membrane prolipoproteins. Hydrolyzes -Xaa-Yaa-Zaa-|-(S,diacylglyceryl)Cys-, in which Xaa is hydrophobic (preferably Leu), and Yaa (Ala or Ser) and Zaa (Gly or Ala) have small, neutral side chains.. Its pathway is protein modification; lipoprotein biosynthesis (signal peptide cleavage). This protein specifically catalyzes the removal of signal peptides from prolipoproteins. The polypeptide is Lipoprotein signal peptidase (Lactococcus lactis subsp. cremoris (strain SK11)).